The chain runs to 309 residues: Homoserine O-acetyltransferase (309 aa).

C142 functions as the Acyl-thioester intermediate in the catalytic mechanism. Substrate is bound by residues K163 and S192. The Proton acceptor role is filled by H235. The active site involves E237. R249 is a substrate binding site.

This sequence belongs to the MetA family.

It is found in the cytoplasm. It catalyses the reaction L-homoserine + acetyl-CoA = O-acetyl-L-homoserine + CoA. It functions in the pathway amino-acid biosynthesis; L-methionine biosynthesis via de novo pathway; O-acetyl-L-homoserine from L-homoserine: step 1/1. In terms of biological role, transfers an acetyl group from acetyl-CoA to L-homoserine, forming acetyl-L-homoserine. The protein is Homoserine O-acetyltransferase of Methanomethylophilus alvi (strain Mx1201).